We begin with the raw amino-acid sequence, 137 residues long: ATP synthase epsilon chain, chloroplastic (137 aa).

It belongs to the ATPase epsilon chain family. As to quaternary structure, F-type ATPases have 2 components, CF(1) - the catalytic core - and CF(0) - the membrane proton channel. CF(1) has five subunits: alpha(3), beta(3), gamma(1), delta(1), epsilon(1). CF(0) has three main subunits: a, b and c.

The protein resides in the plastid. The protein localises to the chloroplast thylakoid membrane. Produces ATP from ADP in the presence of a proton gradient across the membrane. This chain is ATP synthase epsilon chain, chloroplastic, found in Pisum sativum (Garden pea).